A 467-amino-acid polypeptide reads, in one-letter code: MLNLYMWKLSRSQVYQASLLFGSRVISALAFTNTGLVLHGPRRWYTTDNGFLLHRDSKVSLADYIHESTFDPSKGYYSRLWTGSTNNLSHSVHVLRKEGHKCSKEFDPFLHGIPIPQKALNIYEKQRSLFSESISNYLVLQYKLRYFPVFDLKIYDFHSGTGIIALDILDYLYKNHLEVYGRTTYNIVLHNSWQASWFKSMLTSVRYAKHGDHIDIYVSDPLTWNHTDTNPCFVLALQVISSFGHDLFRQSNGAMMMERCWLGPEHFLNEFFTLNTHQKVSSLNYHLAFQQARINVQQGFSDSRAKRYFSGVKQVFWSFFSTQKLTYYPTKAIRFFERLSKQFPHHSLLLMDVCHVDKSLPGINAPSVLSMENDFSTKKMSSNIGHVFQNETVKYVFPTPLYLVSDILQLATHNRSFICSLPHFLRRWSNEHGRKFFVPVEPSSKNLKVPYSFNNYYVVSSMPTYYY.

The protein belongs to the NDUFAF7 family.

It localises to the mitochondrion. The catalysed reaction is L-arginyl-[protein] + 2 S-adenosyl-L-methionine = N(omega),N(omega)'-dimethyl-L-arginyl-[protein] + 2 S-adenosyl-L-homocysteine + 2 H(+). Functionally, arginine methyltransferase involved in the assembly or stability of mitochondrial NADH:ubiquinone oxidoreductase complex (complex I). In Schizosaccharomyces pombe (strain 972 / ATCC 24843) (Fission yeast), this protein is Protein arginine methyltransferase NDUFAF7 homolog, mitochondrial.